We begin with the raw amino-acid sequence, 288 residues long: 4-hydroxy-tetrahydrodipicolinate synthase (288 aa).

T43 contributes to the pyruvate binding site. Y131 (proton donor/acceptor) is an active-site residue. K160 functions as the Schiff-base intermediate with substrate in the catalytic mechanism. Residue I200 participates in pyruvate binding.

The protein belongs to the DapA family. In terms of assembly, homotetramer; dimer of dimers.

The protein localises to the cytoplasm. It carries out the reaction L-aspartate 4-semialdehyde + pyruvate = (2S,4S)-4-hydroxy-2,3,4,5-tetrahydrodipicolinate + H2O + H(+). It functions in the pathway amino-acid biosynthesis; L-lysine biosynthesis via DAP pathway; (S)-tetrahydrodipicolinate from L-aspartate: step 3/4. Catalyzes the condensation of (S)-aspartate-beta-semialdehyde [(S)-ASA] and pyruvate to 4-hydroxy-tetrahydrodipicolinate (HTPA). This chain is 4-hydroxy-tetrahydrodipicolinate synthase, found in Methanococcus aeolicus (strain ATCC BAA-1280 / DSM 17508 / OCM 812 / Nankai-3).